We begin with the raw amino-acid sequence, 1801 residues long: U3 small nucleolar RNA-associated protein 10 (1801 aa).

2 helical membrane passes run 102 to 122 (LALVGGRLLLSPAVKAVEWLI) and 136 to 156 (ILTFLPYYSTPVFLNLLAILP). One copy of the HEAT 1 repeat lies at 581-619 (DVDVQALLPFMLIALADPSERVRSGAVDALANIGKVVDK). The next 2 helical transmembrane spans lie at 939–959 (IQSGMSYLLSLTLGSLLAIVN) and 995–1015 (ALLLVAGLSVIAPELVLHSVM). 5 HEAT repeats span residues 1038-1076 (DQTIDQVVPALIQSLRHQKRDVVSGTSELLLSFTAAFEH), 1110-1148 (YSMDKAVLVLMTGLVSDADATVELSTYSKFLNLVGDSLK), 1244-1282 (TLTTIDFLDTIEALLKRPDDALRRKVLSLLATRLQQSPE), 1288-1327 (QTRMLDFLTVLVDIVQSSPDILLKHAAVTCIDRITEKYGK), and 1756-1794 (LALLPEMLPYISELMEDEDEGVEREVRKWVKQIEGVLGE).

Belongs to the HEATR1/UTP10 family. In terms of assembly, component of the ribosomal small subunit (SSU) processome.

It localises to the nucleus. Its subcellular location is the nucleolus. The protein localises to the membrane. Its function is as follows. Involved in nucleolar processing of pre-18S ribosomal RNA. Involved in ribosome biosynthesis. In Emericella nidulans (strain FGSC A4 / ATCC 38163 / CBS 112.46 / NRRL 194 / M139) (Aspergillus nidulans), this protein is U3 small nucleolar RNA-associated protein 10.